We begin with the raw amino-acid sequence, 20 residues long: 54 kDa cell wall protein (20 aa).

The interval K1–R20 is disordered.

Its subcellular location is the secreted. The protein localises to the cell wall. The protein is 54 kDa cell wall protein of Arabidopsis thaliana (Mouse-ear cress).